We begin with the raw amino-acid sequence, 351 residues long: UDP-N-acetylenolpyruvoylglucosamine reductase (351 aa).

In terms of domain architecture, FAD-binding PCMH-type spans 25-196 (HIQAQARWLL…TAVEFRLPLL (172 aa)). Arg173 is an active-site residue. Residue Ser246 is the Proton donor of the active site. Glu343 is a catalytic residue.

Belongs to the MurB family. FAD is required as a cofactor.

The protein localises to the cytoplasm. It carries out the reaction UDP-N-acetyl-alpha-D-muramate + NADP(+) = UDP-N-acetyl-3-O-(1-carboxyvinyl)-alpha-D-glucosamine + NADPH + H(+). The protein operates within cell wall biogenesis; peptidoglycan biosynthesis. Cell wall formation. The polypeptide is UDP-N-acetylenolpyruvoylglucosamine reductase (Xylella fastidiosa (strain M23)).